A 652-amino-acid polypeptide reads, in one-letter code: Ethylmalonyl-CoA mutase (652 aa).

Residues 519-647 (PLKFVVGKPG…MDIVGLVDRT (129 aa)) form the B12-binding domain. An adenosylcob(III)alamin-binding site is contributed by His-532.

It belongs to the methylmalonyl-CoA mutase family. Homodimer. Adenosylcob(III)alamin serves as cofactor.

The enzyme catalyses (2R)-ethylmalonyl-CoA = (2S)-methylsuccinyl-CoA. In terms of biological role, radical enzyme that catalyzes the transformation of (2R)-ethylmalonyl-CoA to (2S)-methylsuccinyl-CoA. Is involved in the ethylmalonyl-CoA pathway for acetyl-CoA assimilation required for R.sphaeroides growth on acetate as sole carbon source. Is highly specific for its substrate, ethylmalonyl-CoA, and accepts methylmalonyl-CoA only at 0.2% relative activity. This Cereibacter sphaeroides (strain ATCC 17023 / DSM 158 / JCM 6121 / CCUG 31486 / LMG 2827 / NBRC 12203 / NCIMB 8253 / ATH 2.4.1.) (Rhodobacter sphaeroides) protein is Ethylmalonyl-CoA mutase.